A 245-amino-acid polypeptide reads, in one-letter code: DNA polymerase sliding clamp 2 (245 aa).

The protein belongs to the PCNA family. In terms of assembly, homotrimer. The subunits circularize to form a toroid; DNA passes through its center. Replication factor C (RFC) is required to load the toroid on the DNA.

Its function is as follows. Sliding clamp subunit that acts as a moving platform for DNA processing. Responsible for tethering the catalytic subunit of DNA polymerase and other proteins to DNA during high-speed replication. The protein is DNA polymerase sliding clamp 2 of Sulfolobus acidocaldarius (strain ATCC 33909 / DSM 639 / JCM 8929 / NBRC 15157 / NCIMB 11770).